A 411-amino-acid chain; its full sequence is Isocitrate dehydrogenase [NADP] peroxisomal (411 aa).

Residues 78 to 80 (TIT) and Arg-85 each bind NADP(+). Thr-80 serves as a coordination point for substrate. Substrate contacts are provided by residues 97–103 (SPNGTLR), Arg-112, and Arg-135. Asp-254 is a binding site for Mn(2+). Lys-262 is an NADP(+) binding site. Position 277 (Asp-277) interacts with Mn(2+). Residues 312 to 317 (GTVTRH) and Asn-330 contribute to the NADP(+) site.

It belongs to the isocitrate and isopropylmalate dehydrogenases family. Mg(2+) serves as cofactor. The cofactor is Mn(2+).

The protein localises to the peroxisome. The catalysed reaction is D-threo-isocitrate + NADP(+) = 2-oxoglutarate + CO2 + NADPH. Functionally, may play a role in N-alkane metabolism, glutamate synthesis, and/or NADPH generation in the peroxisomes. The sequence is that of Isocitrate dehydrogenase [NADP] peroxisomal (IDP2) from Candida tropicalis (Yeast).